The chain runs to 212 residues: MTPLVGVDEAGKGPVVGSMFVAAVRAPTEALPDGIDDSKRLTDDRREALADRLRDADRIDVAVVECQPADIDDANMNDLTVAAHAAALDGVAASGETVLCDAGDVDAGRFADRVAAAATLDVSVAAEHGADGSDDLVGAASIIAKSARERHVEQLSEQYGAVGSGYPSDPTTKAFLREAFEQEGGFPPCVRTSWSTCERIRAEAEQTDLDGF.

Residues 2–206 form the RNase H type-2 domain; sequence TPLVGVDEAG…CERIRAEAEQ (205 aa). A divalent metal cation-binding residues include aspartate 8, glutamate 9, and aspartate 101.

This sequence belongs to the RNase HII family. The cofactor is Mn(2+). Mg(2+) serves as cofactor.

The protein resides in the cytoplasm. The catalysed reaction is Endonucleolytic cleavage to 5'-phosphomonoester.. Endonuclease that specifically degrades the RNA of RNA-DNA hybrids. The sequence is that of Ribonuclease HII from Natronomonas pharaonis (strain ATCC 35678 / DSM 2160 / CIP 103997 / JCM 8858 / NBRC 14720 / NCIMB 2260 / Gabara) (Halobacterium pharaonis).